The sequence spans 146 residues: Protein MGF 100-3L (146 aa).

Belongs to the asfivirus MGF 100 family.

In terms of biological role, plays a role in virus cell tropism, and may be required for efficient virus replication in macrophages. The sequence is that of Protein MGF 100-3L from Ornithodoros (relapsing fever ticks).